The sequence spans 275 residues: Hydroxyethylthiazole kinase (275 aa).

M50 provides a ligand contact to substrate. ATP-binding residues include R126 and S171. A200 is a substrate binding site.

It belongs to the Thz kinase family. Requires Mg(2+) as cofactor.

The catalysed reaction is 5-(2-hydroxyethyl)-4-methylthiazole + ATP = 4-methyl-5-(2-phosphooxyethyl)-thiazole + ADP + H(+). It participates in cofactor biosynthesis; thiamine diphosphate biosynthesis; 4-methyl-5-(2-phosphoethyl)-thiazole from 5-(2-hydroxyethyl)-4-methylthiazole: step 1/1. Its function is as follows. Catalyzes the phosphorylation of the hydroxyl group of 4-methyl-5-beta-hydroxyethylthiazole (THZ). This chain is Hydroxyethylthiazole kinase, found in Acinetobacter baumannii (strain ACICU).